The primary structure comprises 276 residues: Urease accessory protein UreD (276 aa).

It belongs to the UreD family. UreD, UreF and UreG form a complex that acts as a GTP-hydrolysis-dependent molecular chaperone, activating the urease apoprotein by helping to assemble the nickel containing metallocenter of UreC. The UreE protein probably delivers the nickel.

It localises to the cytoplasm. In terms of biological role, required for maturation of urease via the functional incorporation of the urease nickel metallocenter. This chain is Urease accessory protein UreD, found in Polaromonas sp. (strain JS666 / ATCC BAA-500).